The sequence spans 159 residues: MTVFEGRFTDAGGLRIAVVVARFNDLVTGKLLSGCLDCLSRHGIDVAETSSQLDLAWVPGSFEIPLLAKRLASSGRYDVVITLGAVIRGDTPHFDVVVAEVSKGVAAVARESGVPVIFGVLTTDTLQQALERAGIKSNLGWNYGLQALEMGSLMRSVPA.

Residues F23, 61–63 (SFE), and 85–87 (AVI) each bind 5-amino-6-(D-ribitylamino)uracil. Position 90 to 91 (90 to 91 (DT)) interacts with (2S)-2-hydroxy-3-oxobutyl phosphate. Catalysis depends on H93, which acts as the Proton donor. 5-amino-6-(D-ribitylamino)uracil is bound at residue F118. R132 serves as a coordination point for (2S)-2-hydroxy-3-oxobutyl phosphate.

This sequence belongs to the DMRL synthase family.

The enzyme catalyses (2S)-2-hydroxy-3-oxobutyl phosphate + 5-amino-6-(D-ribitylamino)uracil = 6,7-dimethyl-8-(1-D-ribityl)lumazine + phosphate + 2 H2O + H(+). It participates in cofactor biosynthesis; riboflavin biosynthesis; riboflavin from 2-hydroxy-3-oxobutyl phosphate and 5-amino-6-(D-ribitylamino)uracil: step 1/2. In terms of biological role, catalyzes the formation of 6,7-dimethyl-8-ribityllumazine by condensation of 5-amino-6-(D-ribitylamino)uracil with 3,4-dihydroxy-2-butanone 4-phosphate. This is the penultimate step in the biosynthesis of riboflavin. The polypeptide is 6,7-dimethyl-8-ribityllumazine synthase (Synechococcus sp. (strain RCC307)).